The primary structure comprises 144 residues: Large ribosomal subunit protein uL15 (144 aa).

The interval 1–25 (MFLNTIGARDGSRPEKKRVGRGIGS) is disordered.

It belongs to the universal ribosomal protein uL15 family. In terms of assembly, part of the 50S ribosomal subunit.

Its function is as follows. Binds to the 23S rRNA. The chain is Large ribosomal subunit protein uL15 from Methylococcus capsulatus (strain ATCC 33009 / NCIMB 11132 / Bath).